Consider the following 69-residue polypeptide: Beta-defensin 122 (69 aa).

A signal peptide spans 1–19; sequence MKPFLVTLAVLLLFFQVTA. Cystine bridges form between cysteine 26–cysteine 53, cysteine 33–cysteine 47, and cysteine 37–cysteine 54.

This sequence belongs to the beta-defensin family.

It localises to the secreted. Its function is as follows. Has antibacterial activity. In Macaca mulatta (Rhesus macaque), this protein is Beta-defensin 122 (DEFB122).